Reading from the N-terminus, the 93-residue chain is Ribonuclease P protein component 1 (93 aa).

Belongs to the eukaryotic/archaeal RNase P protein component 1 family. Consists of a catalytic RNA component and at least 4-5 protein subunits.

It is found in the cytoplasm. The enzyme catalyses Endonucleolytic cleavage of RNA, removing 5'-extranucleotides from tRNA precursor.. Functionally, part of ribonuclease P, a protein complex that generates mature tRNA molecules by cleaving their 5'-ends. In Methanosphaera stadtmanae (strain ATCC 43021 / DSM 3091 / JCM 11832 / MCB-3), this protein is Ribonuclease P protein component 1.